The sequence spans 305 residues: 2-aminophenol 1,6-dioxygenase beta subunit (305 aa).

The Fe cation site is built by His14, His63, and His196.

The protein belongs to the LigB/MhpB extradiol dioxygenase family. Heterotetramer of 2 alpha and 2 beta subunits. Fe(2+) is required as a cofactor.

The catalysed reaction is 2-aminophenol + O2 = 2-aminomuconate 6-semialdehyde. Its activity is regulated as follows. Strongly inhibited by CuSO(4), FeCl(3), K(3)[Fe(CN)(6)], AgNO3, HgCl(2) and MnCl(2). Its function is as follows. Component of the 2-aminophenol 1,6-dioxygenase complex that catalyzes the ring fission of 2-aminophenol to produce 2-aminomuconic 6-semialdehyde. AmnB seems to be the catalytic subunit of the complex. The enzyme is also active toward 2-amino-p-cresol, 6-amino-m-cresol, 2-amino-m-cresol, 2-amino-4,5-dimethylphenol, 2-amino-4-chlorophenol, and catechol. In Pseudomonas sp, this protein is 2-aminophenol 1,6-dioxygenase beta subunit (amnB).